A 287-amino-acid polypeptide reads, in one-letter code: Acetylglutamate kinase (287 aa).

Substrate contacts are provided by residues 64 to 65 (GG), R86, and N181.

This sequence belongs to the acetylglutamate kinase family. ArgB subfamily.

It localises to the cytoplasm. The enzyme catalyses N-acetyl-L-glutamate + ATP = N-acetyl-L-glutamyl 5-phosphate + ADP. It participates in amino-acid biosynthesis; L-arginine biosynthesis; N(2)-acetyl-L-ornithine from L-glutamate: step 2/4. Functionally, catalyzes the ATP-dependent phosphorylation of N-acetyl-L-glutamate. The polypeptide is Acetylglutamate kinase (Desulforamulus reducens (strain ATCC BAA-1160 / DSM 100696 / MI-1) (Desulfotomaculum reducens)).